The primary structure comprises 45 residues: uncharacterized protein (45 aa).

This is an uncharacterized protein from Methanocaldococcus jannaschii (strain ATCC 43067 / DSM 2661 / JAL-1 / JCM 10045 / NBRC 100440) (Methanococcus jannaschii).